Here is a 358-residue protein sequence, read N- to C-terminus: Heme A synthase (358 aa).

8 helical membrane-spanning segments follow: residues 25 to 45 (LVRYWLYAVFAVLIAIVMVGG), 111 to 131 (LLARFVGFLVAVPLGFFWLTG), 141 to 161 (MLGLLALGGLQGAIGWWMVAS), 176 to 196 (IHLTTACVIITAVFYIARGLV), 210 to 230 (FAGWIVFAVLVQIYLGGLVAG), 269 to 289 (VQFVHRMFAYTVLLLAILHAV), 304 to 324 (TIVLVGLVFIQAMIGIATLLM), and 326 to 346 (APLHLGLTHQFFALVVLAFAV). H273 serves as a coordination point for heme. Residue H334 coordinates heme.

Belongs to the COX15/CtaA family. Type 2 subfamily. As to quaternary structure, interacts with CtaB. The cofactor is heme b.

The protein resides in the cell membrane. It catalyses the reaction Fe(II)-heme o + 2 A + H2O = Fe(II)-heme a + 2 AH2. It functions in the pathway porphyrin-containing compound metabolism; heme A biosynthesis; heme A from heme O: step 1/1. Catalyzes the conversion of heme O to heme A by two successive hydroxylations of the methyl group at C8. The first hydroxylation forms heme I, the second hydroxylation results in an unstable dihydroxymethyl group, which spontaneously dehydrates, resulting in the formyl group of heme A. The chain is Heme A synthase from Brucella suis (strain ATCC 23445 / NCTC 10510).